Here is a 196-residue protein sequence, read N- to C-terminus: GTP cyclohydrolase 1 (196 aa).

Zn(2+)-binding residues include C85, H88, and C156.

Belongs to the GTP cyclohydrolase I family. Toroid-shaped homodecamer, composed of two pentamers of five dimers.

It catalyses the reaction GTP + H2O = 7,8-dihydroneopterin 3'-triphosphate + formate + H(+). The protein operates within cofactor biosynthesis; 7,8-dihydroneopterin triphosphate biosynthesis; 7,8-dihydroneopterin triphosphate from GTP: step 1/1. In Bacteroides thetaiotaomicron (strain ATCC 29148 / DSM 2079 / JCM 5827 / CCUG 10774 / NCTC 10582 / VPI-5482 / E50), this protein is GTP cyclohydrolase 1.